A 254-amino-acid chain; its full sequence is Ribosomal RNA small subunit methyltransferase G (254 aa).

S-adenosyl-L-methionine is bound by residues Gly84, Phe89, 136 to 137 (VE), and Arg155.

It belongs to the methyltransferase superfamily. RNA methyltransferase RsmG family.

The protein resides in the cytoplasm. Functionally, specifically methylates the N7 position of a guanine in 16S rRNA. The polypeptide is Ribosomal RNA small subunit methyltransferase G (Synechococcus sp. (strain CC9311)).